The primary structure comprises 491 residues: Ketol-acid reductoisomerase (NADP(+)) (491 aa).

Residues 15 to 208 form the KARI N-terminal Rossmann domain; that stretch reads AQLGKCRFMA…GGHRAGVLES (194 aa). Residues 45-48, R68, R76, S78, and 108-110 contribute to the NADP(+) site; these read CGAQ and DKQ. H132 is a catalytic residue. G158 lines the NADP(+) pocket. 2 consecutive KARI C-terminal knotted domains span residues 209 to 344 and 345 to 484; these read SFVA…TASQ and FDGK…MKDM. Residues D217, E221, E389, and E393 each coordinate Mg(2+). S414 lines the substrate pocket.

This sequence belongs to the ketol-acid reductoisomerase family. Requires Mg(2+) as cofactor.

It catalyses the reaction (2R)-2,3-dihydroxy-3-methylbutanoate + NADP(+) = (2S)-2-acetolactate + NADPH + H(+). It carries out the reaction (2R,3R)-2,3-dihydroxy-3-methylpentanoate + NADP(+) = (S)-2-ethyl-2-hydroxy-3-oxobutanoate + NADPH + H(+). The protein operates within amino-acid biosynthesis; L-isoleucine biosynthesis; L-isoleucine from 2-oxobutanoate: step 2/4. It participates in amino-acid biosynthesis; L-valine biosynthesis; L-valine from pyruvate: step 2/4. Involved in the biosynthesis of branched-chain amino acids (BCAA). Catalyzes an alkyl-migration followed by a ketol-acid reduction of (S)-2-acetolactate (S2AL) to yield (R)-2,3-dihydroxy-isovalerate. In the isomerase reaction, S2AL is rearranged via a Mg-dependent methyl migration to produce 3-hydroxy-3-methyl-2-ketobutyrate (HMKB). In the reductase reaction, this 2-ketoacid undergoes a metal-dependent reduction by NADPH to yield (R)-2,3-dihydroxy-isovalerate. This is Ketol-acid reductoisomerase (NADP(+)) from Enterobacter sp. (strain 638).